The following is a 589-amino-acid chain: Serine/threonine-protein phosphatase 2A 65 kDa regulatory subunit A alpha isoform (589 aa).

Residue A2 is modified to N-acetylalanine. HEAT repeat units follow at residues 8–46 (DSLY…GVER), 47–84 (TRSE…GGPE), 85–123 (YVHC…SPSD), 124–161 (LEAH…VSSA), 162–200 (VKAE…ELDN), 201–239 (VKSE…PQED), 240–278 (LEAL…GPEI), 279–321 (TKTD…RENV), 322–360 (IMTQ…GKDS), 361–399 (TIEH…GIRQ), 400–438 (LSQS…GVEF), 439–477 (FDEK…GKEW), 478–516 (AHAT…GQDI), 517–555 (TTKH…DNST), and 556–589 (LQSE…LSLA). The tract at residues 8–399 (DSLYPIAVLI…CVNEVIGIRQ (392 aa)) is PP2A subunit B binding. The tract at residues 47-321 (TRSELLPFLT…NLSADCRENV (275 aa)) is polyoma small and medium T antigens Binding. Residues 85-239 (YVHCLLPPLE…NIAQLLPQED (155 aa)) form an SV40 small T antigen binding region. An N6-acetyllysine modification is found at K280. A PP2A subunit C binding region spans residues 400–589 (LSQSLLPAIV…QEALTVLSLA (190 aa)).

The protein belongs to the phosphatase 2A regulatory subunit A family. PP2A consists of a common heterodimeric core enzyme, composed of PPP2CA a 36 kDa catalytic subunit (subunit C) and PPP2R1A a 65 kDa constant regulatory subunit (PR65 or subunit A), that associates with a variety of regulatory subunits. Proteins that associate with the core dimer include three families of regulatory subunits B (the R2/B/PR55/B55, R3/B''/PR72/PR130/PR59 and R5/B'/B56 families), the 48 kDa variable regulatory subunit, viral proteins, and cell signaling molecules. Found in a complex with at least ARL2, PPP2CB, PPP2R1A, PPP2R2A, PPP2R5E and TBCD. Interacts with the PP2A C catalytic subunit PPP2CA. Interacts with the PP2A B subunit PPP2R2A. Interacts with the PP2A B subunit PPP2R5D. Interacts with FOXO1; the interaction dephosphorylates FOXO1 on AKT-mediated phosphorylation sites. Interacts with IPO9. Interacts with TP53 and SGO1. Interacts with PLA2G16; this interaction might decrease PP2A activity. Interacts with CTTNBP2NL. Interacts with GNA12; the interaction promotes protein phosphatase 2A activation causing dephosphorylation of MAPT. Interacts with CIP2A; this interaction stabilizes CIP2A. Interacts with PABIR1/FAM122A. Interacts with ADCY8; antagonizes interaction between ADCY8 and calmodulin. Interacts with CRTC3 (when phosphorylated at 'Ser-391'). Interacts with SPRY2. Part of the core of STRIPAK complexes composed of PP2A catalytic and scaffolding subunits, the striatins (PP2A regulatory subunits), the striatin-associated proteins MOB4, STRIP1 and STRIP2, PDCD10 and members of the STE20 kinases, such as STK24 and STK26. Component of the Integrator-PP2A (INTAC) complex, composed of the Integrator core complex and protein phosphatase 2A subunits PPP2CA and PPP2R1A.

It localises to the cytoplasm. The protein resides in the nucleus. The protein localises to the chromosome. It is found in the centromere. Its subcellular location is the lateral cell membrane. It localises to the cell projection. The protein resides in the dendrite. Its function is as follows. The PR65 subunit of protein phosphatase 2A serves as a scaffolding molecule to coordinate the assembly of the catalytic subunit and a variable regulatory B subunit. Upon interaction with GNA12 promotes dephosphorylation of microtubule associated protein TAU/MAPT. Required for proper chromosome segregation and for centromeric localization of SGO1 in mitosis. Together with RACK1 adapter, mediates dephosphorylation of AKT1 at 'Ser-473', preventing AKT1 activation and AKT-mTOR signaling pathway. Dephosphorylation of AKT1 is essential for regulatory T-cells (Treg) homeostasis and stability. Part of the striatin-interacting phosphatase and kinase (STRIPAK) complexes. STRIPAK complexes have critical roles in protein (de)phosphorylation and are regulators of multiple signaling pathways including Hippo, MAPK, nuclear receptor and cytoskeleton remodeling. Different types of STRIPAK complexes are involved in a variety of biological processes such as cell growth, differentiation, apoptosis, metabolism and immune regulation. Key mediator of a quality checkpoint during transcription elongation as part of the Integrator-PP2A (INTAC) complex. The INTAC complex drives premature transcription termination of transcripts that are unfavorably configured for transcriptional elongation: within the INTAC complex, acts as a scaffolding subunit for PPP2CA, which catalyzes dephosphorylation of the C-terminal domain (CTD) of Pol II subunit POLR2A/RPB1 and SUPT5H/SPT5, thereby preventing transcriptional elongation. Regulates the recruitment of the SKA complex to kinetochores. This chain is Serine/threonine-protein phosphatase 2A 65 kDa regulatory subunit A alpha isoform (PPP2R1A), found in Bos taurus (Bovine).